The primary structure comprises 83 residues: ATP synthase subunit c 2 (83 aa).

The next 2 membrane-spanning stretches (helical) occupy residues 8-28 (IASI…PALG) and 58-78 (LAMI…LLFA).

The protein belongs to the ATPase C chain family. In terms of assembly, F-type ATPases have 2 components, F(1) - the catalytic core - and F(0) - the membrane proton channel. F(1) has five subunits: alpha(3), beta(3), gamma(1), delta(1), epsilon(1). F(0) has four main subunits: a(1), b(1), b'(1) and c(10-14). The alpha and beta chains form an alternating ring which encloses part of the gamma chain. F(1) is attached to F(0) by a central stalk formed by the gamma and epsilon chains, while a peripheral stalk is formed by the delta, b and b' chains.

It is found in the cell inner membrane. F(1)F(0) ATP synthase produces ATP from ADP in the presence of a proton or sodium gradient. F-type ATPases consist of two structural domains, F(1) containing the extramembraneous catalytic core and F(0) containing the membrane proton channel, linked together by a central stalk and a peripheral stalk. During catalysis, ATP synthesis in the catalytic domain of F(1) is coupled via a rotary mechanism of the central stalk subunits to proton translocation. Its function is as follows. Key component of the F(0) channel; it plays a direct role in translocation across the membrane. A homomeric c-ring of between 10-14 subunits forms the central stalk rotor element with the F(1) delta and epsilon subunits. This is ATP synthase subunit c 2 from Cereibacter sphaeroides (strain ATCC 17029 / ATH 2.4.9) (Rhodobacter sphaeroides).